The following is a 413-amino-acid chain: Alpha-1-antitrypsin 1-4 (413 aa).

The first 24 residues, 1-24 (MTPSISWSLLLLAGLCCLVPSFLA), serve as a signal peptide directing secretion. N-linked (GlcNAc...) asparagine glycans are attached at residues asparagine 64, asparagine 101, and asparagine 265. An RCL region spans residues 368-387 (AATVLQVATYSMPPIVRFDH).

It belongs to the serpin family.

Its subcellular location is the secreted. Its function is as follows. Inhibitor of serine proteases. Can inhibit trypsin and chymotrypsin; relatively ineffective against elastase. In Mus musculus (Mouse), this protein is Alpha-1-antitrypsin 1-4 (Serpina1d).